The primary structure comprises 211 residues: ATP phosphoribosyltransferase (211 aa).

It belongs to the ATP phosphoribosyltransferase family. Short subfamily. Heteromultimer composed of HisG and HisZ subunits.

Its subcellular location is the cytoplasm. It catalyses the reaction 1-(5-phospho-beta-D-ribosyl)-ATP + diphosphate = 5-phospho-alpha-D-ribose 1-diphosphate + ATP. It participates in amino-acid biosynthesis; L-histidine biosynthesis; L-histidine from 5-phospho-alpha-D-ribose 1-diphosphate: step 1/9. In terms of biological role, catalyzes the condensation of ATP and 5-phosphoribose 1-diphosphate to form N'-(5'-phosphoribosyl)-ATP (PR-ATP). Has a crucial role in the pathway because the rate of histidine biosynthesis seems to be controlled primarily by regulation of HisG enzymatic activity. This is ATP phosphoribosyltransferase from Pseudomonas putida (strain ATCC 47054 / DSM 6125 / CFBP 8728 / NCIMB 11950 / KT2440).